The following is a 378-amino-acid chain: Trans-enoyl reductase poxP (378 aa).

An NADP(+)-binding site is contributed by 62-65 (CDWK). 151-158 (SVFATLWI) contributes to the substrate binding site. NADP(+)-binding positions include 187–190 (STST), 210–213 (SPHN), tyrosine 228, and 275–276 (LE). 295–299 (GLAAS) is a substrate binding site. An NADP(+)-binding site is contributed by 364 to 365 (TS).

The protein belongs to the zinc-containing alcohol dehydrogenase family. Monomer.

It participates in secondary metabolite biosynthesis. In terms of biological role, trans-enoyl reductase; part of the gene cluster that mediates the biosynthesis of oxaleimides, cytotoxic compounds containing an unusual disubstituted succinimide moiety. The first step of the pathway is provided by the HR-PKS poxF that serves in a new mode of collaborative biosynthesis with the PKS-NRPS poxE, by providing the olefin containing amino acid substrate via the synthesis of an ACP-bound dec-4-enoate. The cytochrome P450 monooxygenase poxM-catalyzed oxidation at the alpha-position creates the enzyme-bound 2-hydroxydec-4-enoyl-ACP thioester, which may be prone to spontaneous hydrolysis to yield 2-hydroxydec-4-enoic acid due to increased electrophilicity of the carbonyl. 2-hydroxydec-4-enoic acid can then be further oxidized by poxM to yield the alpha-ketoacid 2-oxodec-4-enoicacid, which is reductively aminated by the aminotransferase poxL to yield (S,E)-2-aminodec-4-enoic acid. The Hybrid PKS-NRPS synthetase poxE then performs condensation between the octaketide product of its PKS modules and the amino group of (S,E)-2-aminodec-4-enoic acid which is activated and incorporated by the adenylation domain. The resulting aminoacyl product can be cyclized by the Diels-Alderase PoxQ and reductively released by the reductive (R) domain of poxE to yield an aldehyde intermediate. The released aldehyde is then substrate for a Knoevenagel condensation by the hydrolyase poxO followed by an oxidation at the 5-position of the pyrrolidone ring. The presence of the olefin from the amino acid building block allows for migration of the substituted allyl group to occur. This allylic transposition reaction takes place in a conjugate addition, semipinacol-like fashion to yield a succinimide intermediate. Iterative two-electron oxidations of the C7 methyl of the succinimide intermediate to the carboxylic acid can be catalyzed by one of two remaining cytochrome P450 monooxygenasess poxC or poxD to yield oxaleimide A. Subsequent oxidation yields the maleimide scaffold oxaleimide I. Both oxaleimide A and oxaleimide I can undergo oxidative modifications in the decalin ring to yield the series of products oxaleimides B to H. The polypeptide is Trans-enoyl reductase poxP (Penicillium oxalicum).